Reading from the N-terminus, the 302-residue chain is MSWIIFYTIIFALLVLDLGVIHKKNEVMSFKQSLLFSLFYFTISCLFGIYIYYNMGADSTREYYTCFLIEKAMSLDNIFVISIIFQFFKIPQKYQHRVLFFGIIGVIAFRAVMIYGGIILINKFSWLLYIFAVILIATGVKTFYVSHKTFDIQNSYLYKSIIKYLNVTPNLEGDKFFVTRNKKLYVTPLFISLILIEAIDLVFAIDSIPAIFAITNDAYIIYTSNIFAILGLRALFFCLAEIVERFSYIKYSLALILIFIGIKIFIHHYIAIPAYISLTVTITLLLLGIFASVIRKNIVDRQ.

9 consecutive transmembrane segments (helical) span residues 1-21 (MSWIIFYTIIFALLVLDLGVI), 33-53 (SLLFSLFYFTISCLFGIYIYY), 67-87 (FLIEKAMSLDNIFVISIIFQF), 101-121 (FGIIGVIAFRAVMIYGGIILI), 124-144 (FSWLLYIFAVILIATGVKTFY), 185-205 (YVTPLFISLILIEAIDLVFAI), 220-240 (IIYTSNIFAILGLRALFFCLA), 253-273 (LALILIFIGIKIFIHHYIAIP), and 274-294 (AYISLTVTITLLLLGIFASVI).

Belongs to the TerC family.

It localises to the cell membrane. This is an uncharacterized protein from Rickettsia bellii (strain RML369-C).